The chain runs to 123 residues: uncharacterized protein (123 aa).

This is an uncharacterized protein from Schizosaccharomyces pombe (strain 972 / ATCC 24843) (Fission yeast).